Reading from the N-terminus, the 126-residue chain is Probable V-type proton ATPase subunit G (126 aa).

Positions 23–45 (NEARKRKLQRTKQAKQEAQAEVE) are disordered. Basic residues predominate over residues 26–35 (RKRKLQRTKQ).

Belongs to the V-ATPase G subunit family. V-ATPase is a heteromultimeric enzyme made up of two complexes: the ATP-hydrolytic V1 complex and the proton translocation V0 complex. The V1 complex consists of three catalytic AB heterodimers that form a heterohexamer, three peripheral stalks each consisting of EG heterodimers, one central rotor including subunits D and F, and the regulatory subunits C and H. The proton translocation complex V0 consists of the proton transport subunit a, a ring of proteolipid subunits c9c'', rotary subunit d, subunits e and f, and the accessory subunits vah-19/Ac45 and vah-20/PRR.

In terms of biological role, subunit of the V1 complex of vacuolar(H+)-ATPase (V-ATPase), a multisubunit enzyme composed of a peripheral complex (V1) that hydrolyzes ATP and a membrane integral complex (V0) that translocates protons. V-ATPase is responsible for acidifying and maintaining the pH of intracellular compartments and in some cell types, is targeted to the plasma membrane, where it is responsible for acidifying the extracellular environment. In neurons, required for necrotic cell death by promoting intracellular acidification. This is Probable V-type proton ATPase subunit G from Caenorhabditis briggsae.